Consider the following 159-residue polypeptide: Phosphopantetheine adenylyltransferase (159 aa).

Residue T10 coordinates substrate. ATP is bound by residues 10-11 (TF) and H18. Residues K42, M74, and R88 each coordinate substrate. ATP-binding positions include 89 to 91 (GLR), E99, and 124 to 130 (WSFISSS).

It belongs to the bacterial CoaD family. As to quaternary structure, homohexamer. Requires Mg(2+) as cofactor.

It localises to the cytoplasm. It catalyses the reaction (R)-4'-phosphopantetheine + ATP + H(+) = 3'-dephospho-CoA + diphosphate. It participates in cofactor biosynthesis; coenzyme A biosynthesis; CoA from (R)-pantothenate: step 4/5. Functionally, reversibly transfers an adenylyl group from ATP to 4'-phosphopantetheine, yielding dephospho-CoA (dPCoA) and pyrophosphate. The sequence is that of Phosphopantetheine adenylyltransferase from Shigella sonnei (strain Ss046).